A 104-amino-acid chain; its full sequence is MEQDKIRIKLKSYDYKLLDQSVKQIVETVKRTGSSVKGPIPLPTSRRRWVVLRSPHKFDQSREHFEIREFKRMLDIVKITPQTIESLMEISLPAGVDIEVKMRG.

This sequence belongs to the universal ribosomal protein uS10 family. As to quaternary structure, part of the 30S ribosomal subunit.

Functionally, involved in the binding of tRNA to the ribosomes. This Hydrogenobaculum sp. (strain Y04AAS1) protein is Small ribosomal subunit protein uS10.